The following is a 153-amino-acid chain: Ubiquitin/ISG15-conjugating enzyme E2 L6 (153 aa).

Residues 2–149 (MASMRVVKEL…AEEFTLRFGV (148 aa)) form the UBC core domain. Cysteine 86 (glycyl thioester intermediate) is an active-site residue.

Belongs to the ubiquitin-conjugating enzyme family. Interacts with RNF19A, RNF19B and RNF144B. Interacts with FLT3 (tyrosine phosphorylated). Post-translationally, ISGylated. In terms of tissue distribution, present in natural killer cells (at protein level).

It catalyses the reaction S-ubiquitinyl-[E1 ubiquitin-activating enzyme]-L-cysteine + [E2 ubiquitin-conjugating enzyme]-L-cysteine = [E1 ubiquitin-activating enzyme]-L-cysteine + S-ubiquitinyl-[E2 ubiquitin-conjugating enzyme]-L-cysteine.. The protein operates within protein modification; protein ubiquitination. Its function is as follows. Catalyzes the covalent attachment of ubiquitin or ISG15 to other proteins. Functions in the E6/E6-AP-induced ubiquitination of p53/TP53. Promotes ubiquitination and subsequent proteasomal degradation of FLT3. The protein is Ubiquitin/ISG15-conjugating enzyme E2 L6 (UBE2L6) of Homo sapiens (Human).